Reading from the N-terminus, the 125-residue chain is DNA-directed RNA polymerase II subunit RPB9 (125 aa).

M1 carries the N-acetylmethionine modification. Residues C17, C20, C39, C42, C86, C89, C114, and C119 each coordinate Zn(2+). The C4-type zinc finger occupies 17–42; that stretch reads CQECNNMLYPKEDKENRILLYACRNC. The TFIIS-type zinc finger occupies 82–124; sequence EDHPCQKCGHKEAVFFQSHSARAEDAMRLYYVCTAPHCGHRWT.

The protein belongs to the archaeal RpoM/eukaryotic RPA12/RPB9/RPC11 RNA polymerase family. Component of the RNA polymerase II (Pol II) core complex consisting of 12 subunits: a ten-subunit catalytic core composed of POLR2A/RPB1, POLR2B/RPB2, POLR2C/RPB3, POLR2I/RPB9, POLR2J/RPB11, POLR2E/RPABC1, POLR2F/RPABC2, POLR2H/RPABC3, POLR2K/RPABC4 and POLR2L/RPABC5 and a mobile stalk composed of two subunits POLR2D/RPB4 and POLR2G/RPB7, protruding from the core and functioning primarily in transcription initiation. Part of Pol II(G) complex, in which Pol II core associates with an additional subunit POLR2M; unlike conventional Pol II, Pol II(G) functions as a transcriptional repressor. Part of TBP-based Pol II pre-initiation complex (PIC), in which Pol II core assembles with general transcription factors and other specific initiation factors including GTF2E1, GTF2E2, GTF2F1, GTF2F2, TCEA1, ERCC2, ERCC3, GTF2H2, GTF2H3, GTF2H4, GTF2H5, GTF2A1, GTF2A2, GTF2B and TBP; this large multi-subunit PIC complex mediates DNA unwinding and targets Pol II core to the transcription start site where the first phosphodiester bond forms.

It localises to the nucleus. The protein resides in the nucleolus. Functionally, DNA-dependent RNA polymerase catalyzes the transcription of DNA into RNA using the four ribonucleoside triphosphates as substrates. Component of RNA polymerase II which synthesizes mRNA precursors and many functional non-coding RNAs. Pol II is the central component of the basal RNA polymerase II transcription machinery. It is composed of mobile elements that move relative to each other. POLR2I/RPB9 is part of the upper jaw surrounding the central large cleft and thought to grab the incoming DNA template. The polypeptide is DNA-directed RNA polymerase II subunit RPB9 (POLR2I) (Bos taurus (Bovine)).